The sequence spans 286 residues: DNA-directed RNA polymerase subunit Rpo3 (286 aa).

It belongs to the archaeal Rpo3/eukaryotic RPB3 RNA polymerase subunit family. Part of the RNA polymerase complex.

It localises to the cytoplasm. The catalysed reaction is RNA(n) + a ribonucleoside 5'-triphosphate = RNA(n+1) + diphosphate. In terms of biological role, DNA-dependent RNA polymerase (RNAP) catalyzes the transcription of DNA into RNA using the four ribonucleoside triphosphates as substrates. The polypeptide is DNA-directed RNA polymerase subunit Rpo3 (Aeropyrum pernix (strain ATCC 700893 / DSM 11879 / JCM 9820 / NBRC 100138 / K1)).